The following is a 287-amino-acid chain: ATP synthase gamma chain (287 aa).

It belongs to the ATPase gamma chain family. F-type ATPases have 2 components, CF(1) - the catalytic core - and CF(0) - the membrane proton channel. CF(1) has five subunits: alpha(3), beta(3), gamma(1), delta(1), epsilon(1). CF(0) has three main subunits: a, b and c.

It is found in the cell inner membrane. Functionally, produces ATP from ADP in the presence of a proton gradient across the membrane. The gamma chain is believed to be important in regulating ATPase activity and the flow of protons through the CF(0) complex. The chain is ATP synthase gamma chain from Salmonella agona (strain SL483).